Consider the following 331-residue polypeptide: Adenosine deaminase (331 aa).

2 residues coordinate Zn(2+): H12 and H14. Substrate-binding residues include H14, D16, and G170. H197 contributes to the Zn(2+) binding site. E200 (proton donor) is an active-site residue. D278 serves as a coordination point for Zn(2+). D279 is a binding site for substrate.

The protein belongs to the metallo-dependent hydrolases superfamily. Adenosine and AMP deaminases family. Adenosine deaminase subfamily. The cofactor is Zn(2+).

The enzyme catalyses adenosine + H2O + H(+) = inosine + NH4(+). It carries out the reaction 2'-deoxyadenosine + H2O + H(+) = 2'-deoxyinosine + NH4(+). Functionally, catalyzes the hydrolytic deamination of adenosine and 2-deoxyadenosine. The protein is Adenosine deaminase of Shewanella loihica (strain ATCC BAA-1088 / PV-4).